The chain runs to 108 residues: Small ribosomal subunit protein eS25B (108 aa).

The span at 1–20 shows a compositional bias: low complexity; the sequence is MPPKQQLSKAAKAAAALAGG. Residues 1–30 are disordered; that stretch reads MPPKQQLSKAAKAAAALAGGKKSKKKWSKK. N,N-dimethylproline; by NTM1 is present on Pro2. Residues 21–30 are compositionally biased toward basic residues; it reads KKSKKKWSKK.

This sequence belongs to the eukaryotic ribosomal protein eS25 family. As to quaternary structure, component of the small ribosomal subunit (SSU). Mature yeast ribosomes consist of a small (40S) and a large (60S) subunit. The 40S small subunit contains 1 molecule of ribosomal RNA (18S rRNA) and 33 different proteins (encoded by 57 genes). The large 60S subunit contains 3 rRNA molecules (25S, 5.8S and 5S rRNA) and 46 different proteins (encoded by 81 genes).

It localises to the cytoplasm. Functionally, component of the ribosome, a large ribonucleoprotein complex responsible for the synthesis of proteins in the cell. The small ribosomal subunit (SSU) binds messenger RNAs (mRNAs) and translates the encoded message by selecting cognate aminoacyl-transfer RNA (tRNA) molecules. The large subunit (LSU) contains the ribosomal catalytic site termed the peptidyl transferase center (PTC), which catalyzes the formation of peptide bonds, thereby polymerizing the amino acids delivered by tRNAs into a polypeptide chain. The nascent polypeptides leave the ribosome through a tunnel in the LSU and interact with protein factors that function in enzymatic processing, targeting, and the membrane insertion of nascent chains at the exit of the ribosomal tunnel. This chain is Small ribosomal subunit protein eS25B, found in Saccharomyces cerevisiae (strain ATCC 204508 / S288c) (Baker's yeast).